A 930-amino-acid polypeptide reads, in one-letter code: Kinesin-like protein KIN-7J (930 aa).

Residues 9–273 (KILVSVRVRP…TLGTVIRKLR (265 aa)) form the Kinesin motor domain. 95 to 102 (GQTSSGKT) contributes to the ATP binding site. Disordered stretches follow at residues 449–569 (LKNS…IGTD) and 655–686 (MQTKASPGRPNTSSISFDSGSSTSIDTRSLKD). Positions 459–468 (SVEAQESQES) are enriched in low complexity. 2 stretches are compositionally biased toward basic and acidic residues: residues 473 to 482 (EQMKNEERKM) and 533 to 558 (AKLDEDATSRDKWESKQQQEADKDCN). Residues 666 to 681 (TSSISFDSGSSTSIDT) show a composition bias toward low complexity. K805 participates in a covalent cross-link: Glycyl lysine isopeptide (Lys-Gly) (interchain with G-Cter in ubiquitin).

This sequence belongs to the TRAFAC class myosin-kinesin ATPase superfamily. Kinesin family. KIN-7 subfamily.

The protein is Kinesin-like protein KIN-7J of Arabidopsis thaliana (Mouse-ear cress).